Reading from the N-terminus, the 250-residue chain is MWTGVNMDSSKRQFLQQLGVLTAGASLVPLAEAKFPFSPERHEGSPRHRYAMLIDLRRCIGCQSCTVSCTIENQTPQGAFRTTVNQYQVQREGSQEVTNVLLPRLCNHCDNPPCVPVCPVQATFQREDGIVVVDNKRCVGCAYCVQACPYDARFINHETQTADKCTFCVHRLEAGLLPACVESCVGGARIIGDIKDPHSRIATMLHQHRDAIKVLKPENGTSPHVFYLGLDDAFVTPLMGRAQPALWQEV.

Positions 1–33 form a signal peptide, tat-type signal; sequence MWTGVNMDSSKRQFLQQLGVLTAGASLVPLAEA. 4Fe-4S ferredoxin-type domains lie at 50-79, 97-128, and 129-158; these read YAMLIDLRRCIGCQSCTVSCTIENQTPQGA, VTNVLLPRLCNHCDNPPCVPVCPVQATFQRED, and GIVVVDNKRCVGCAYCVQACPYDARFINHE. 16 residues coordinate [4Fe-4S] cluster: C59, C62, C65, C69, C106, C109, C114, C118, C138, C141, C144, C148, C165, C168, C180, and C184.

Probably composed of three subunits: TtrA, TtrB and TtrC. Predicted to be exported by the Tat system. The position of the signal peptide cleavage has not been experimentally proven.

It localises to the periplasm. Its subcellular location is the cell inner membrane. In terms of biological role, part of a membrane-bound tetrathionate reductase that catalyzes the reduction of tetrathionate to thiosulfate. TtrB is probably involved in transfer of electrons from TtrC to TtrA. During mice infection, the ability to use tetrathionate as an electron acceptor is a growth advantage for S.typhimurium over the competing microbiota in the lumen of the inflamed gut. This is Tetrathionate reductase subunit B (ttrB) from Salmonella typhimurium (strain LT2 / SGSC1412 / ATCC 700720).